Reading from the N-terminus, the 129-residue chain is Phosphoribosyl-AMP cyclohydrolase (129 aa).

Residue Asp76 participates in Mg(2+) binding. Cys77 serves as a coordination point for Zn(2+). Mg(2+) contacts are provided by Asp78 and Asp80. Residues Cys97 and Cys104 each coordinate Zn(2+).

Belongs to the PRA-CH family. As to quaternary structure, homodimer. Mg(2+) serves as cofactor. Zn(2+) is required as a cofactor.

It localises to the cytoplasm. It catalyses the reaction 1-(5-phospho-beta-D-ribosyl)-5'-AMP + H2O = 1-(5-phospho-beta-D-ribosyl)-5-[(5-phospho-beta-D-ribosylamino)methylideneamino]imidazole-4-carboxamide. Its pathway is amino-acid biosynthesis; L-histidine biosynthesis; L-histidine from 5-phospho-alpha-D-ribose 1-diphosphate: step 3/9. In terms of biological role, catalyzes the hydrolysis of the adenine ring of phosphoribosyl-AMP. This chain is Phosphoribosyl-AMP cyclohydrolase, found in Polaromonas naphthalenivorans (strain CJ2).